Here is a 487-residue protein sequence, read N- to C-terminus: Mu-like prophage FluMu tail sheath protein (487 aa).

The protein belongs to the myoviridae tail sheath protein family.

In terms of biological role, major component of the tail. The protein is Mu-like prophage FluMu tail sheath protein of Haemophilus influenzae (strain ATCC 51907 / DSM 11121 / KW20 / Rd).